A 302-amino-acid chain; its full sequence is Bifunctional protein FolD (302 aa).

Residues 165–167 (GRS), Ser190, and Ile231 contribute to the NADP(+) site.

It belongs to the tetrahydrofolate dehydrogenase/cyclohydrolase family. Homodimer.

It catalyses the reaction (6R)-5,10-methylene-5,6,7,8-tetrahydrofolate + NADP(+) = (6R)-5,10-methenyltetrahydrofolate + NADPH. The enzyme catalyses (6R)-5,10-methenyltetrahydrofolate + H2O = (6R)-10-formyltetrahydrofolate + H(+). Its pathway is one-carbon metabolism; tetrahydrofolate interconversion. Catalyzes the oxidation of 5,10-methylenetetrahydrofolate to 5,10-methenyltetrahydrofolate and then the hydrolysis of 5,10-methenyltetrahydrofolate to 10-formyltetrahydrofolate. This chain is Bifunctional protein FolD, found in Prochlorococcus marinus (strain MIT 9211).